Reading from the N-terminus, the 183-residue chain is Alkyl hydroperoxide reductase AhpD (183 aa).

Cysteine 132 serves as the catalytic Proton donor. Cysteine 132 and cysteine 135 are joined by a disulfide. The active-site Cysteine sulfenic acid (-SOH) intermediate is the cysteine 135.

Belongs to the AhpD family.

The catalysed reaction is N(6)-[(R)-dihydrolipoyl]-L-lysyl-[lipoyl-carrier protein] + a hydroperoxide = N(6)-[(R)-lipoyl]-L-lysyl-[lipoyl-carrier protein] + an alcohol + H2O. In terms of biological role, antioxidant protein with alkyl hydroperoxidase activity. Required for the reduction of the AhpC active site cysteine residues and for the regeneration of the AhpC enzyme activity. The polypeptide is Alkyl hydroperoxide reductase AhpD (Acidobacterium capsulatum (strain ATCC 51196 / DSM 11244 / BCRC 80197 / JCM 7670 / NBRC 15755 / NCIMB 13165 / 161)).